We begin with the raw amino-acid sequence, 340 residues long: Short-chain dehydrogenase/reductase prx1 (340 aa).

NADP(+) contacts are provided by I60, K84, D104, N131, and K162. S184 functions as the Proton donor in the catalytic mechanism. NADP(+) contacts are provided by Y210 and K214. Catalysis depends on Y210, which acts as the Proton acceptor. K214 acts as the Lowers pKa of active site Tyr in catalysis.

The protein belongs to the short-chain dehydrogenases/reductases (SDR) family.

It functions in the pathway sesquiterpene biosynthesis. Its function is as follows. Short-chain dehydrogenase/reductase; part of the gene cluster that mediates the biosynthesis of PR-toxin, a bicyclic sesquiterpene belonging to the eremophilane class and acting as a mycotoxin. The first step of the pathway is catalyzed by the aristolochene synthase which performs the cyclization of trans,trans-farnesyl diphosphate (FPP) to the bicyclic sesquiterpene aristolochene. Following the formation of aristolochene, the non-oxygenated aristolochene is converted to the trioxygenated intermediate eremofortin B, via 7-epi-neopetasone. This conversion appears to involve three enzymes, a hydroxysterol oxidase-like enzyme, the quinone-oxidase prx3 that forms the quinone-type-structure in the bicyclic nucleus of aristolochene with the C8-oxo group and the C-3 hydroxyl group, and the P450 monooxygenase ORF6 that introduces the epoxide at the double bond between carbons 1 and 2. No monoxy or dioxy-intermediates have been reported to be released to the broth, so these three early oxidative reactions may be coupled together. Eremofortin B is further oxidized by another P450 monooxygenase, that introduces a second epoxide between carbons 7 and 11 prior to acetylation to eremofortin A by the acetyltransferase ORF8. The second epoxidation may be performed by a second P450 monooxygenase. After the acetylation step, eremofortin A is converted to eremofortin C and then to PR-toxin. First the conversion of eremofortin A to eremofortin C proceeds by oxidation of the side chain of the molecule at C-12 and is catalyzed by the short-chain oxidoreductase prx1. The cytochrome P450 monooxygenase ORF6 is probably also involved in this step. The primary alcohol formed at C-12 is finally oxidized by the short-chain alcohol dehydrogenase prx4 that forms PR-toxin. This Penicillium roqueforti (strain FM164) protein is Short-chain dehydrogenase/reductase prx1.